Here is a 57-residue protein sequence, read N- to C-terminus: uncharacterized protein (57 aa).

The chain crosses the membrane as a helical span at residues 4–26 (FMPIRVFLYSYVIINSLLSSFFH).

Its subcellular location is the membrane. This is an uncharacterized protein from Saccharomyces cerevisiae (strain ATCC 204508 / S288c) (Baker's yeast).